Reading from the N-terminus, the 372-residue chain is Fork head domain-containing protein FD4 (372 aa).

The segment at residues 12–103 (QKPPYSYISL…FDMFENGSLL (92 aa)) is a DNA-binding region (fork-head). Disordered stretches follow at residues 225–245 (ESLI…DEDD) and 261–281 (PTTP…RTED).

In terms of tissue distribution, expressed in early embryogenesis in 14 symmetrical pairs of segmentally arranged neuroblasts. Also, later in embryogenesis, in a cluster of cells in head region.

It is found in the nucleus. In terms of biological role, involved in development during embryogenesis. The protein is Fork head domain-containing protein FD4 (fd96Ca) of Drosophila melanogaster (Fruit fly).